The sequence spans 316 residues: Short-chain dehydrogenase/reductase family 16C member 6 (316 aa).

Residue 40–64 (LITGAASGLGRLLAIKFASLGAILV) coordinates NAD(+). S173 is a binding site for substrate. Y186 (proton acceptor) is an active-site residue.

The protein belongs to the short-chain dehydrogenases/reductases (SDR) family.

This is Short-chain dehydrogenase/reductase family 16C member 6 (SDR16C6) from Bos taurus (Bovine).